Here is a 216-residue protein sequence, read N- to C-terminus: Probable transaldolase (216 aa).

Lys83 serves as the catalytic Schiff-base intermediate with substrate.

It belongs to the transaldolase family. Type 3B subfamily.

It is found in the cytoplasm. The catalysed reaction is D-sedoheptulose 7-phosphate + D-glyceraldehyde 3-phosphate = D-erythrose 4-phosphate + beta-D-fructose 6-phosphate. Its pathway is carbohydrate degradation; pentose phosphate pathway; D-glyceraldehyde 3-phosphate and beta-D-fructose 6-phosphate from D-ribose 5-phosphate and D-xylulose 5-phosphate (non-oxidative stage): step 2/3. Its function is as follows. Transaldolase is important for the balance of metabolites in the pentose-phosphate pathway. The protein is Probable transaldolase of Methanococcus aeolicus (strain ATCC BAA-1280 / DSM 17508 / OCM 812 / Nankai-3).